Reading from the N-terminus, the 93-residue chain is Cytochrome c oxidase polypeptide 6, mitochondrial (93 aa).

Residues 2–33 lie on the Mitochondrial matrix side of the membrane; it reads STGNESYNLRYPKGFKGYPYNMYKLEGYGTPK. Residues 34–53 form a helical membrane-spanning segment; it reads GYITLIGVVATLTVSGLFFA. Residues 54–93 lie on the Mitochondrial intermembrane side of the membrane; sequence KTRSNKREYPTHNKEWRAKTLAYAKETNADPIYQLPKDKI.

The protein belongs to the cytochrome c oxidase IV family. In terms of assembly, component of the cytochrome c oxidase (complex IV, CIV), a multisubunit enzyme composed of a catalytic core of 3 subunits and seevral supernumerary subunits. The complex exists as a monomer or a dimer and forms supercomplexes (SCs) in the inner mitochondrial membrane with ubiquinol-cytochrome c oxidoreductase (cytochrome b-c1 complex, complex III, CIII).

The protein resides in the mitochondrion inner membrane. It participates in energy metabolism; oxidative phosphorylation. In terms of biological role, component of the cytochrome c oxidase, the last enzyme in the mitochondrial electron transport chain which drives oxidative phosphorylation. The respiratory chain contains 3 multisubunit complexes succinate dehydrogenase (complex II, CII), ubiquinol-cytochrome c oxidoreductase (cytochrome b-c1 complex, complex III, CIII) and cytochrome c oxidase (complex IV, CIV), that cooperate to transfer electrons derived from NADH and succinate to molecular oxygen, creating an electrochemical gradient over the inner membrane that drives transmembrane transport and the ATP synthase. Cytochrome c oxidase is the component of the respiratory chain that catalyzes the reduction of oxygen to water. Electrons originating from reduced cytochrome c in the intermembrane space (IMS) are transferred via the dinuclear copper A center (CU(A)) of subunit 2 and heme A of subunit 1 to the active site in subunit 1, a binuclear center (BNC) formed by heme A3 and copper B (CU(B)). The BNC reduces molecular oxygen to 2 water molecules using 4 electrons from cytochrome c in the IMS and 4 protons from the mitochondrial matrix. The chain is Cytochrome c oxidase polypeptide 6, mitochondrial (cxfA) from Dictyostelium discoideum (Social amoeba).